The primary structure comprises 500 residues: NAD(P)H-quinone oxidoreductase chain 4, chloroplastic (500 aa).

13 helical membrane-spanning segments follow: residues Phe-4–Leu-24, Tyr-35–Phe-55, Ile-87–Val-107, Leu-134–Met-154, Phe-167–Leu-187, Val-208–Ile-228, His-242–Ile-262, Ala-272–Ala-292, Ile-305–Asp-325, Gly-330–Gly-350, Leu-386–Thr-406, Leu-411–Ile-431, and Leu-462–Val-482.

The protein belongs to the complex I subunit 4 family.

The protein localises to the plastid. Its subcellular location is the chloroplast thylakoid membrane. The enzyme catalyses a plastoquinone + NADH + (n+1) H(+)(in) = a plastoquinol + NAD(+) + n H(+)(out). It catalyses the reaction a plastoquinone + NADPH + (n+1) H(+)(in) = a plastoquinol + NADP(+) + n H(+)(out). This is NAD(P)H-quinone oxidoreductase chain 4, chloroplastic from Solanum tuberosum (Potato).